The primary structure comprises 630 residues: 1-deoxy-D-xylulose-5-phosphate synthase (630 aa).

Residues His72 and 113-115 each bind thiamine diphosphate; that span reads GHS. Position 144 (Asp144) interacts with Mg(2+). Thiamine diphosphate-binding positions include 145-146, Asn173, Tyr284, and Glu367; that span reads GA. Asn173 serves as a coordination point for Mg(2+).

It belongs to the transketolase family. DXPS subfamily. As to quaternary structure, homodimer. Requires Mg(2+) as cofactor. It depends on thiamine diphosphate as a cofactor.

The catalysed reaction is D-glyceraldehyde 3-phosphate + pyruvate + H(+) = 1-deoxy-D-xylulose 5-phosphate + CO2. The protein operates within metabolic intermediate biosynthesis; 1-deoxy-D-xylulose 5-phosphate biosynthesis; 1-deoxy-D-xylulose 5-phosphate from D-glyceraldehyde 3-phosphate and pyruvate: step 1/1. Catalyzes the acyloin condensation reaction between C atoms 2 and 3 of pyruvate and glyceraldehyde 3-phosphate to yield 1-deoxy-D-xylulose-5-phosphate (DXP). This Geobacillus sp. (strain WCH70) protein is 1-deoxy-D-xylulose-5-phosphate synthase.